The primary structure comprises 181 residues: Large ribosomal subunit protein eL18 (181 aa).

It belongs to the eukaryotic ribosomal protein eL18 family.

The protein resides in the cytoplasm. The protein is Large ribosomal subunit protein eL18 (rpl18) of Dictyostelium discoideum (Social amoeba).